We begin with the raw amino-acid sequence, 2415 residues long: Spectrin alpha chain, erythrocytic 1 (2415 aa).

Spectrin repeat units lie at residues 52 to 152 (YHYQ…SDVL), 157 to 259 (KFYQ…ESLS), 263 to 365 (DLQR…AKLK), 370 to 471 (YHRF…HQYR), 475 to 576 (DFHL…RKLL), 580 to 681 (QLLQ…GTQL), 686 to 787 (QLLQ…KKKL), 792 to 894 (KLQQ…NDLK), and 898 to 967 (QLQQ…QQQQ). Position 257 is a phosphoserine (Ser-257). The SH3 domain occupies 975 to 1034 (GREARVIALYDFEARSRREVSMKKNDVLTLLSSINKDWWKVEADDHQGFVPAVYVRKLAP). At Ser-990 the chain carries Phosphoserine. Spectrin repeat units follow at residues 1085 to 1177 (LAYE…YQLL), 1183 to 1285 (VEMF…SLNE), 1287 to 1390 (HKFF…KMLD), 1394 to 1489 (ELQL…QLLT), 1499 to 1603 (DLKQ…KLNE), 1606 to 1709 (RQQR…KLKE), 1712 to 1815 (ALFQ…NLEE), 1818 to 1921 (EYLQ…SQLD), 1924 to 2029 (HAFQ…KLLE), 2040 to 2142 (LFME…QELQ), and 2154 to 2254 (MCQE…NLEQ). Residue Ser-1972 is modified to Phosphoserine. EF-hand domains lie at 2267-2302 (ETLK…LNYY), 2310-2345 (EPEP…KESE), and 2347-2382 (IKTS…EQVS). Ca(2+)-binding residues include Asp-2280, Asn-2282, Thr-2284, Arg-2286, Glu-2291, Asp-2323, Tyr-2329, and Asp-2334.

The protein belongs to the spectrin family. In terms of assembly, composed of non-homologous chains, alpha and beta, which aggregate to form dimers, tetramers, and higher polymers. Interacts with FASLG. Interacts with BCAM.

It localises to the cytoplasm. Its subcellular location is the cytoskeleton. The protein localises to the cell cortex. In terms of biological role, spectrin is the major constituent of the cytoskeletal network underlying the erythrocyte plasma membrane. It associates with band 4.1 and actin to form the cytoskeletal superstructure of the erythrocyte plasma membrane. The protein is Spectrin alpha chain, erythrocytic 1 (Spta1) of Mus musculus (Mouse).